A 124-amino-acid chain; its full sequence is S-adenosylmethionine decarboxylase proenzyme (124 aa).

The active-site Schiff-base intermediate with substrate; via pyruvic acid is S63. A Pyruvic acid (Ser); by autocatalysis modification is found at S63. H68 functions as the Proton acceptor; for processing activity in the catalytic mechanism. The active-site Proton donor; for catalytic activity is the C83.

Belongs to the prokaryotic AdoMetDC family. Type 1 subfamily. In terms of assembly, heterotetramer of two alpha and two beta chains arranged as a dimer of alpha/beta heterodimers. Requires pyruvate as cofactor. Post-translationally, is synthesized initially as an inactive proenzyme. Formation of the active enzyme involves a self-maturation process in which the active site pyruvoyl group is generated from an internal serine residue via an autocatalytic post-translational modification. Two non-identical subunits are generated from the proenzyme in this reaction, and the pyruvate is formed at the N-terminus of the alpha chain, which is derived from the carboxyl end of the proenzyme. The post-translation cleavage follows an unusual pathway, termed non-hydrolytic serinolysis, in which the side chain hydroxyl group of the serine supplies its oxygen atom to form the C-terminus of the beta chain, while the remainder of the serine residue undergoes an oxidative deamination to produce ammonia and the pyruvoyl group blocking the N-terminus of the alpha chain.

It catalyses the reaction S-adenosyl-L-methionine + H(+) = S-adenosyl 3-(methylsulfanyl)propylamine + CO2. The protein operates within amine and polyamine biosynthesis; S-adenosylmethioninamine biosynthesis; S-adenosylmethioninamine from S-adenosyl-L-methionine: step 1/1. Catalyzes the decarboxylation of S-adenosylmethionine to S-adenosylmethioninamine (dcAdoMet), the propylamine donor required for the synthesis of the polyamines spermine and spermidine from the diamine putrescine. The polypeptide is S-adenosylmethionine decarboxylase proenzyme (Caldanaerobacter subterraneus subsp. tengcongensis (strain DSM 15242 / JCM 11007 / NBRC 100824 / MB4) (Thermoanaerobacter tengcongensis)).